Reading from the N-terminus, the 131-residue chain is uncharacterized protein (131 aa).

This is an uncharacterized protein from Orgyia pseudotsugata multicapsid polyhedrosis virus (OpMNPV).